We begin with the raw amino-acid sequence, 226 residues long: Ribose-5-phosphate isomerase A (226 aa).

Residues 33–36, 86–89, and 99–102 each bind substrate; these read TGST, DGAD, and KGGG. The active-site Proton acceptor is glutamate 108. Lysine 126 contacts substrate.

This sequence belongs to the ribose 5-phosphate isomerase family. Homodimer.

It carries out the reaction aldehydo-D-ribose 5-phosphate = D-ribulose 5-phosphate. It functions in the pathway carbohydrate degradation; pentose phosphate pathway; D-ribose 5-phosphate from D-ribulose 5-phosphate (non-oxidative stage): step 1/1. In terms of biological role, catalyzes the reversible conversion of ribose-5-phosphate to ribulose 5-phosphate. The chain is Ribose-5-phosphate isomerase A from Bordetella parapertussis (strain 12822 / ATCC BAA-587 / NCTC 13253).